Reading from the N-terminus, the 475-residue chain is Ribulose bisphosphate carboxylase large chain (475 aa).

A propeptide spanning residues M1 to S2 is cleaved from the precursor. P3 carries the post-translational modification N-acetylproline. N6,N6,N6-trimethyllysine is present on K14. The substrate site is built by N123 and T173. K175 functions as the Proton acceptor in the catalytic mechanism. Substrate is bound at residue K177. Mg(2+) contacts are provided by K201, D203, and E204. Residue K201 is modified to N6-carboxylysine. H294 functions as the Proton acceptor in the catalytic mechanism. 3 residues coordinate substrate: R295, H327, and S379.

Belongs to the RuBisCO large chain family. Type I subfamily. As to quaternary structure, heterohexadecamer of 8 large chains and 8 small chains; disulfide-linked. The disulfide link is formed within the large subunit homodimers. It depends on Mg(2+) as a cofactor. Post-translationally, the disulfide bond which can form in the large chain dimeric partners within the hexadecamer appears to be associated with oxidative stress and protein turnover.

Its subcellular location is the plastid. The protein resides in the chloroplast. The enzyme catalyses 2 (2R)-3-phosphoglycerate + 2 H(+) = D-ribulose 1,5-bisphosphate + CO2 + H2O. It carries out the reaction D-ribulose 1,5-bisphosphate + O2 = 2-phosphoglycolate + (2R)-3-phosphoglycerate + 2 H(+). Functionally, ruBisCO catalyzes two reactions: the carboxylation of D-ribulose 1,5-bisphosphate, the primary event in carbon dioxide fixation, as well as the oxidative fragmentation of the pentose substrate in the photorespiration process. Both reactions occur simultaneously and in competition at the same active site. In Equisetum arvense (Field horsetail), this protein is Ribulose bisphosphate carboxylase large chain.